Reading from the N-terminus, the 443-residue chain is MSEMTPREIVSELNRHIIGQDKAKRAVAIALRNRWRRMQLEESLRVEVTPKNILMIGPTGVGKTEIARRLAKLANVPFIKVEATKFTEVGYVGKEVESIIRDLTDVAVKLTHQQAMEKVKFRAEELAEERVLDALLPPPRDAWGQAEQKEENSSTRQVFRKKLREGQLNDKEIEINVAVPQMGVEIMAPPGMEEMTNQLQGLFQNLAGDTKKKRKMKIKDALKALVEEEAAKLVNQEELKEQAIYNVENNGIVFIDEIDKICKRGEVSGPDVSREGVQRDLLPLIEGSTVSTKHGMVRTDHILFIASGAFQVAKPSDLIPELQGRLPIRVELEALSSNDFKRILTEPKASLTEQYVALMKTEQVDVQFTEDGIKQIADAAWQVNETTENIGARRLHTVLERLMDEISFDATEKAGQAFVIDAAYVKARLGELVEDEDLSRFIL.

ATP-binding positions include isoleucine 18, 60 to 65 (GVGKTE), aspartate 256, glutamate 321, and arginine 393.

It belongs to the ClpX chaperone family. HslU subfamily. As to quaternary structure, a double ring-shaped homohexamer of HslV is capped on each side by a ring-shaped HslU homohexamer. The assembly of the HslU/HslV complex is dependent on binding of ATP.

The protein resides in the cytoplasm. In terms of biological role, ATPase subunit of a proteasome-like degradation complex; this subunit has chaperone activity. The binding of ATP and its subsequent hydrolysis by HslU are essential for unfolding of protein substrates subsequently hydrolyzed by HslV. HslU recognizes the N-terminal part of its protein substrates and unfolds these before they are guided to HslV for hydrolysis. This chain is ATP-dependent protease ATPase subunit HslU, found in Vibrio cholerae serotype O1 (strain ATCC 39315 / El Tor Inaba N16961).